Here is a 180-residue protein sequence, read N- to C-terminus: Thioredoxin 3 (180 aa).

Residues 1–3 lie on the Cytoplasmic side of the membrane; it reads MAL. Residues 4–24 traverse the membrane as a helical; Signal-anchor for type II membrane protein segment; it reads ICIGSVCFSLFHIGVIILLII. The Lumenal portion of the chain corresponds to 25–180; it reads NYFSSHIKKI…FQKYCLEKAK (156 aa). One can recognise a Thioredoxin domain in the interval 29-176; the sequence is SHIKKIFPSF…IEKAFQKYCL (148 aa). Active-site nucleophile residues include Cys-99 and Cys-102. Cysteines 99 and 102 form a disulfide.

Belongs to the thioredoxin family. Post-translationally, the disulfide bond between Cys-99 and Cys-102 acts as a redox-active center and is reduced by thioredoxin reductase TRXR.

The protein resides in the endoplasmic reticulum membrane. Functionally, participates in various redox reactions through the reversible oxidation of its active center dithiol to a disulfide and catalyzes dithiol-disulfide exchange reactions. This chain is Thioredoxin 3, found in Plasmodium falciparum (isolate 3D7).